Here is a 224-residue protein sequence, read N- to C-terminus: Peroxynitrite isomerase 2 (224 aa).

Residues 71–77 (GVWRGEG) carry the GXWXGXG motif. 2 residues coordinate heme b: K187 and H214.

It belongs to the nitrobindin family. Homodimer. The cofactor is heme b.

The catalysed reaction is peroxynitrite = nitrate. The protein operates within nitrogen metabolism. In terms of biological role, heme-binding protein able to scavenge peroxynitrite and to protect free L-tyrosine against peroxynitrite-mediated nitration, by acting as a peroxynitrite isomerase that converts peroxynitrite to nitrate. Therefore, this protein likely plays a role in peroxynitrite sensing and in the detoxification of reactive nitrogen and oxygen species (RNS and ROS, respectively). Is able to bind nitric oxide (NO) in vitro, but may act as a sensor of peroxynitrite levels in vivo. This Mycobacterium sp. (strain JLS) protein is Peroxynitrite isomerase 2.